Here is a 424-residue protein sequence, read N- to C-terminus: MATAVRLLGRRVSSWRLRPLPSPLAVPQRAHSMLPVDDDINGLNEEQKQLRHTISKFVQENLAPKAQEIDQSNDFKNLREFWKQLGSLGVLGITAPVQYGGSGLGYLEHVLVMEEISRASAAVGLSYGAHSNLCINQIVRNGNEAQKEKYLPKLISGEFIGALAMSEPNAGSDVVSMRLKAEKKGDHYVLNGNKFWITNGPDADVLVVYAKTDLTAVPASRGITAFIVEKDMPGFSTSKKLDKLGMRGSNTCELVFEDCKVPAANILSQESKGVYVLMSGLDLERLVLAGGPLGIMQAVLDHTIPYLHVREAFGQKIGQFQLMQGKMADMYTRLMACRQYVYNVARACDEGHITAKDCAGVILYTAECATQVALDGIQCLGGNGYINDFPMGRFLRDAKLYEIGGGTSEVRRLVIGRAFNADFR.

The transit peptide at 1 to 30 (MATAVRLLGRRVSSWRLRPLPSPLAVPQRA) directs the protein to the mitochondrion. N6-acetyllysine; alternate is present on residues K56, K65, and K76. N6-succinyllysine; alternate is present on residues K56, K65, and K76. FAD contacts are provided by residues 163–172 (LAMSEPNAGS) and 196–198 (WIT). Residue S172 coordinates substrate. Residue 220–221 (SR) coordinates substrate. The residue at position 239 (K239) is an N6-acetyllysine. K260 carries the N6-acetyllysine; alternate modification. Residue K260 is modified to N6-succinyllysine; alternate. Substrate contacts are provided by residues Y275 and 282–285 (DLER). The active-site Proton acceptor is the E284. R310 serves as a coordination point for FAD. Position 316 is an N6-succinyllysine (K316). Residues Q321 and 378–382 (QCLGG) each bind FAD. A substrate-binding site is contributed by 405–406 (GG). FAD is bound at residue 407 to 409 (TSE).

This sequence belongs to the acyl-CoA dehydrogenase family. In terms of assembly, homotetramer. The cofactor is FAD.

The protein resides in the mitochondrion matrix. It carries out the reaction 3-methylbutanoyl-CoA + oxidized [electron-transfer flavoprotein] + H(+) = 3-methylbut-2-enoyl-CoA + reduced [electron-transfer flavoprotein]. It catalyses the reaction pentanoyl-CoA + oxidized [electron-transfer flavoprotein] + H(+) = (2E)-pentenoyl-CoA + reduced [electron-transfer flavoprotein]. The enzyme catalyses hexanoyl-CoA + oxidized [electron-transfer flavoprotein] + H(+) = (2E)-hexenoyl-CoA + reduced [electron-transfer flavoprotein]. The catalysed reaction is butanoyl-CoA + oxidized [electron-transfer flavoprotein] + H(+) = (2E)-butenoyl-CoA + reduced [electron-transfer flavoprotein]. The protein operates within amino-acid degradation; L-leucine degradation; (S)-3-hydroxy-3-methylglutaryl-CoA from 3-isovaleryl-CoA: step 1/3. Catalyzes the conversion of isovaleryl-CoA/3-methylbutanoyl-CoA to 3-methylbut-2-enoyl-CoA as an intermediate step in the leucine (Leu) catabolic pathway. To a lesser extent, is also able to catalyze the oxidation of other saturated short-chain acyl-CoA thioesters as pentanoyl-CoA, hexenoyl-CoA and butenoyl-CoA. This chain is Isovaleryl-CoA dehydrogenase, mitochondrial (Ivd), found in Rattus norvegicus (Rat).